The following is a 258-amino-acid chain: Tryptophan synthase alpha chain (258 aa).

Active-site proton acceptor residues include E52 and D63.

This sequence belongs to the TrpA family. As to quaternary structure, tetramer of two alpha and two beta chains.

The catalysed reaction is (1S,2R)-1-C-(indol-3-yl)glycerol 3-phosphate + L-serine = D-glyceraldehyde 3-phosphate + L-tryptophan + H2O. The protein operates within amino-acid biosynthesis; L-tryptophan biosynthesis; L-tryptophan from chorismate: step 5/5. The alpha subunit is responsible for the aldol cleavage of indoleglycerol phosphate to indole and glyceraldehyde 3-phosphate. The protein is Tryptophan synthase alpha chain of Streptococcus pneumoniae (strain P1031).